The sequence spans 459 residues: MAESTNLRLRLPLICIILEVILIILFGVLVEYNDDTDAKKWNKNNSTDPATNEFYYRYPSFQDVHVMIFVGFGFLMTFLQRYGFSSMGFNFLIAAFSLQWATLMQGFFHGMHHGKIHVGVTSMINADFCTGAVLISFGAVLGKTSPVQLLVMAILEVTLFAVNEYILLSILGANDAGGSMTIHTFGAYFGLMVTRILHRPNLDKSKHKNSSVYHSDLFAMIGTIFLWMFWPSFNSAITQYGDPQHRTAANTYYSLAACTLATFGFSSLVNPEGKLDMVHIQNAALAGGVAVGTAGEMMLTPFGSMIVGFLAGTISVLGYKYLTPFMESKLKIQDTCGIHNLHGMPGILGAIVGAVTAALASRDVYGNGLDKVFLEAADNSQWSAQTKGGFQAISLAVTLGIALIGGLITGFLLKLPIYGTPPDTQCFEDAVYWEVPGEEEDHHELNEVSTQNEVEKLNS.

Residues 1–10 (MAESTNLRLR) are Cytoplasmic-facing. Residues 11 to 31 (LPLICIILEVILIILFGVLVE) traverse the membrane as a helical segment. Residues 32–58 (YNDDTDAKKWNKNNSTDPATNEFYYRY) lie on the Extracellular side of the membrane. N-linked (GlcNAc...) asparagine glycosylation is present at asparagine 45. A helical transmembrane segment spans residues 59–79 (PSFQDVHVMIFVGFGFLMTFL). Topologically, residues 80-87 (QRYGFSSM) are cytoplasmic. Residues 88–108 (GFNFLIAAFSLQWATLMQGFF) form a helical membrane-spanning segment. The Extracellular segment spans residues 109 to 121 (HGMHHGKIHVGVT). A helical membrane pass occupies residues 122–142 (SMINADFCTGAVLISFGAVLG). At 143-149 (KTSPVQL) the chain is on the cytoplasmic side. A helical membrane pass occupies residues 150 to 170 (LVMAILEVTLFAVNEYILLSI). The Extracellular portion of the chain corresponds to 171–176 (LGANDA). The helical transmembrane segment at 177–197 (GGSMTIHTFGAYFGLMVTRIL) threads the bilayer. The Cytoplasmic portion of the chain corresponds to 198 to 216 (HRPNLDKSKHKNSSVYHSD). Residues 217 to 237 (LFAMIGTIFLWMFWPSFNSAI) traverse the membrane as a helical segment. At 238–248 (TQYGDPQHRTA) the chain is on the extracellular side. A helical membrane pass occupies residues 249 to 269 (ANTYYSLAACTLATFGFSSLV). The Cytoplasmic portion of the chain corresponds to 270–274 (NPEGK). A helical transmembrane segment spans residues 275-295 (LDMVHIQNAALAGGVAVGTAG). Position 296 (glutamate 296) is a topological domain, extracellular. The helical transmembrane segment at 297 to 317 (MMLTPFGSMIVGFLAGTISVL) threads the bilayer. At 318-340 (GYKYLTPFMESKLKIQDTCGIHN) the chain is on the cytoplasmic side. A helical transmembrane segment spans residues 341–361 (LHGMPGILGAIVGAVTAALAS). The Extracellular portion of the chain corresponds to 362-392 (RDVYGNGLDKVFLEAADNSQWSAQTKGGFQA). The helical transmembrane segment at 393–413 (ISLAVTLGIALIGGLITGFLL) threads the bilayer. Over 414–459 (KLPIYGTPPDTQCFEDAVYWEVPGEEEDHHELNEVSTQNEVEKLNS) the chain is Cytoplasmic. The segment at 440–459 (EDHHELNEVSTQNEVEKLNS) is disordered.

It belongs to the ammonium transporter (TC 2.A.49) family. Rh subfamily.

The protein resides in the basolateral cell membrane. It is found in the cytoplasmic vesicle membrane. In terms of biological role, functions as an ammonia transporter. May play a role in the elimination of ammonia in the gill. This is Ammonium transporter Rh type B (rhbg) from Danio rerio (Zebrafish).